The sequence spans 381 residues: MALQALNIWTRVILTDASRAAVFRGALQSHCFKCRHGAKRFLLSEDVVKLEEFQQKKLSHEMSQLKDYRFDIVNQKLEKNEIILKTELKTLLHSCQSAEDVIVARNVIKRYHENNRTTAFGEFKFGPLFMRLCYELGLEELAATTIKDPALKGFFSDTTSFNITIDMLFNKQLYESGLEVVGEMKKQGVSLSRDTFMLVFAICYKLNTSRSYHICLTLLEEGQTKGNIIPRRAYCFAIALALKQNDLERAQIFYSHIMSTGTRLCQNLRVFILAVKGSMKEAVYVLKTARISETPVLVRKPEFSREVVNVLRRKSAGGVWEERVEQVLTQLEKAGQITEITLDDLLCYTPSRKRRLLELPQKDRQIKQRTRKSLQSGLLLE.

Residues 157 to 191 form a PPR repeat; it reads DTTSFNITIDMLFNKQLYESGLEVVGEMKKQGVSL.

It belongs to the PTCD2 family.

The protein localises to the mitochondrion. In terms of biological role, involved in mitochondrial RNA maturation and mitochondrial respiratory chain function. The protein is Pentatricopeptide repeat-containing protein 2, mitochondrial (ptcd2) of Danio rerio (Zebrafish).